A 618-amino-acid chain; its full sequence is DNA ligase 2 (618 aa).

Residues 197–208 (DKKTLESREDAK) show a composition bias toward basic and acidic residues. Residues 197 to 250 (DKKTLESREDAKSVPPASQPEITNKISGDTSPNTSESVQTKKSDPDTSSNVDPS) are disordered. Positions 216 to 234 (PEITNKISGDTSPNTSESV) are enriched in polar residues. Glutamate 312 is a binding site for ATP. Lysine 314 functions as the N6-AMP-lysine intermediate in the catalytic mechanism. ATP contacts are provided by arginine 319, arginine 334, glutamate 363, phenylalanine 403, arginine 476, and lysine 482. Positions 459–480 (HEGVMLKDPDSTYNPGSRGQHW) are disordered.

Belongs to the ATP-dependent DNA ligase family. Mg(2+) serves as cofactor.

It catalyses the reaction ATP + (deoxyribonucleotide)n-3'-hydroxyl + 5'-phospho-(deoxyribonucleotide)m = (deoxyribonucleotide)n+m + AMP + diphosphate.. DNA ligase that seals nicks in double-stranded DNA during DNA replication, DNA recombination and DNA repair. This is DNA ligase 2 from Haloquadratum walsbyi (strain DSM 16790 / HBSQ001).